A 536-amino-acid chain; its full sequence is MFS-type efflux pump MFS1 (536 aa).

Transmembrane regions (helical) follow at residues 30 to 50 (VTGLKLAVIVTGLCLSVLLVA), 80 to 100 (YLLTICAFQLIFGKIYTFFPV), and 102 to 122 (WVFLIAITIFEIGSAICGAAP). Residue Asn123 is glycosylated (N-linked (GlcNAc...) asparagine). A run of 3 helical transmembrane segments spans residues 133–153 (VAGIGSAGIFSGALIIIAYSI), 163–183 (GAIGGMYGIASVAGPLMGGAF), and 191–211 (WCFYINLPIGAVTILSILIFL). Residue Asn221 is glycosylated (N-linked (GlcNAc...) asparagine). A run of 8 helical transmembrane segments spans residues 234 to 254 (IGTAFFMPSIICLLLALQWGG), 264 to 284 (IIALFVVFAVLISGFIYFQIR), 306 to 326 (FFLFTIGSAFFIMVYYLPIWF), 342 to 362 (IPMVLSLVVLSIASGITVTAI), 366 to 386 (APLYYVSTVLTSIGAGLLTTF), 400 to 420 (IIFGAGVGTGLQLSIIAAQAV), 426 to 446 (VAVGTVIMMFCQTLGGALFVS), and 503 to 523 (TWYVATALAALSVIGSVGMEW).

Belongs to the major facilitator superfamily. TCR/Tet family.

It localises to the cell membrane. Its function is as follows. MFS-type efflux pump involved in the modulation susceptibility to azoles, including fluconazole, itraconazole, ketoconazole, miconazole and voriconazole. Confers also increased resistance chloramphenicol and thiamphenicol, suggesting that it acts as a pleiotropic drug transporter with a broad substrate spectrum. Finally, increases the tolerance to cycloheximide when expressed in S.cerevisiae, but not in dermatophyte species. In Trichophyton rubrum (strain ATCC MYA-4607 / CBS 118892) (Athlete's foot fungus), this protein is MFS-type efflux pump MFS1.